The chain runs to 77 residues: Translation initiation factor IF-1, chloroplastic (77 aa).

The 71-residue stretch at 1–71 (MKEQKWTHEG…TRGRIIYRLR (71 aa)) folds into the S1-like domain.

This sequence belongs to the IF-1 family. In terms of assembly, component of the 30S ribosomal translation pre-initiation complex which assembles on the 30S ribosome in the order IF-2 and IF-3, IF-1 and N-formylmethionyl-tRNA(fMet); mRNA recruitment can occur at any time during PIC assembly.

Its subcellular location is the plastid. The protein localises to the chloroplast. In terms of biological role, one of the essential components for the initiation of protein synthesis. Stabilizes the binding of IF-2 and IF-3 on the 30S subunit to which N-formylmethionyl-tRNA(fMet) subsequently binds. Helps modulate mRNA selection, yielding the 30S pre-initiation complex (PIC). Upon addition of the 50S ribosomal subunit IF-1, IF-2 and IF-3 are released leaving the mature 70S translation initiation complex. In Coffea arabica (Arabian coffee), this protein is Translation initiation factor IF-1, chloroplastic.